The chain runs to 215 residues: Peptide methionine sulfoxide reductase MsrA (215 aa).

Residue C58 is part of the active site.

The protein belongs to the MsrA Met sulfoxide reductase family.

It catalyses the reaction L-methionyl-[protein] + [thioredoxin]-disulfide + H2O = L-methionyl-(S)-S-oxide-[protein] + [thioredoxin]-dithiol. The enzyme catalyses [thioredoxin]-disulfide + L-methionine + H2O = L-methionine (S)-S-oxide + [thioredoxin]-dithiol. In terms of biological role, has an important function as a repair enzyme for proteins that have been inactivated by oxidation. Catalyzes the reversible oxidation-reduction of methionine sulfoxide in proteins to methionine. This chain is Peptide methionine sulfoxide reductase MsrA, found in Pseudomonas syringae pv. tomato (strain ATCC BAA-871 / DC3000).